We begin with the raw amino-acid sequence, 100 residues long: Urease subunit gamma (100 aa).

The protein belongs to the urease gamma subunit family. Heterotrimer of UreA (gamma), UreB (beta) and UreC (alpha) subunits. Three heterotrimers associate to form the active enzyme.

The protein resides in the cytoplasm. It carries out the reaction urea + 2 H2O + H(+) = hydrogencarbonate + 2 NH4(+). It participates in nitrogen metabolism; urea degradation; CO(2) and NH(3) from urea (urease route): step 1/1. The chain is Urease subunit gamma from Prochlorococcus marinus (strain NATL1A).